A 572-amino-acid polypeptide reads, in one-letter code: Proline--tRNA ligase (572 aa).

The protein belongs to the class-II aminoacyl-tRNA synthetase family. ProS type 1 subfamily. In terms of assembly, homodimer.

It is found in the cytoplasm. It catalyses the reaction tRNA(Pro) + L-proline + ATP = L-prolyl-tRNA(Pro) + AMP + diphosphate. Its function is as follows. Catalyzes the attachment of proline to tRNA(Pro) in a two-step reaction: proline is first activated by ATP to form Pro-AMP and then transferred to the acceptor end of tRNA(Pro). As ProRS can inadvertently accommodate and process non-cognate amino acids such as alanine and cysteine, to avoid such errors it has two additional distinct editing activities against alanine. One activity is designated as 'pretransfer' editing and involves the tRNA(Pro)-independent hydrolysis of activated Ala-AMP. The other activity is designated 'posttransfer' editing and involves deacylation of mischarged Ala-tRNA(Pro). The misacylated Cys-tRNA(Pro) is not edited by ProRS. The chain is Proline--tRNA ligase from Citrobacter koseri (strain ATCC BAA-895 / CDC 4225-83 / SGSC4696).